Here is a 349-residue protein sequence, read N- to C-terminus: Dipeptide transport ATP-binding protein DppD (349 aa).

The 252-residue stretch at 7–258 folds into the ABC transporter domain; it reads LEVKNLHVNF…PQHPYTWGLL (252 aa). 43 to 50 provides a ligand contact to ATP; that stretch reads GESGSGKS.

The protein belongs to the ABC transporter superfamily. The complex is composed of two ATP-binding proteins (DppD and DppF), two transmembrane proteins (DppB and DppC) and a solute-binding protein (DppA).

It localises to the cell membrane. It catalyses the reaction a dipeptide(out) + ATP + H2O = a dipeptide(in) + ADP + phosphate + H(+). Its function is as follows. Part of the ABC transporter DppABCDF involved in dipeptide transport. Responsible for energy coupling to the transport system. In Lactococcus lactis subsp. cremoris (strain MG1363), this protein is Dipeptide transport ATP-binding protein DppD.